The chain runs to 373 residues: Alcohol dehydrogenase class-3 (373 aa).

An N-acetylalanine modification is found at Ala1. Residues Cys44, His66, Cys96, Cys99, Cys102, Cys110, and Cys173 each coordinate Zn(2+).

This sequence belongs to the zinc-containing alcohol dehydrogenase family. Class-III subfamily. Homodimer. Zn(2+) serves as cofactor.

Its subcellular location is the cytoplasm. It carries out the reaction a primary alcohol + NAD(+) = an aldehyde + NADH + H(+). The enzyme catalyses a secondary alcohol + NAD(+) = a ketone + NADH + H(+). The catalysed reaction is S-(hydroxymethyl)glutathione + NADP(+) = S-formylglutathione + NADPH + H(+). It catalyses the reaction S-(hydroxymethyl)glutathione + NAD(+) = S-formylglutathione + NADH + H(+). It carries out the reaction S-nitrosoglutathione + NADH + H(+) = S-(hydroxysulfenamide)glutathione + NAD(+). In terms of biological role, class-III ADH is remarkably ineffective in oxidizing ethanol, but it readily catalyzes the oxidation of long-chain primary alcohols and the oxidation of S-(hydroxymethyl) glutathione. Also acts as a S-nitroso-glutathione reductase by catalyzing the NADH-dependent reduction of S-nitrosoglutathione, thereby regulating protein S-nitrosylation. The sequence is that of Alcohol dehydrogenase class-3 from Saara hardwickii (Indian spiny-tailed lizard).